We begin with the raw amino-acid sequence, 519 residues long: Developmental regulatory protein wetA (519 aa).

6 disordered regions span residues 105–165, 270–294, 301–320, 325–344, 389–452, and 470–495; these read PSRP…MRSS, PSSA…WQSD, LSFT…PMPS, QQAS…NVGN, SQIH…GSNK, and LTGV…RRRK. Positions 108–118 are enriched in low complexity; that stretch reads PTATHALSTSP. Over residues 155-165 the composition is skewed to polar residues; sequence QSFSPSLMRSS. Residues 301–315 show a composition bias toward polar residues; that stretch reads LSFTPDLQGQDSQWW. Residues 389-400 are compositionally biased toward polar residues; the sequence is SQIHNVSRSPSL. Residues 419-428 show a composition bias toward basic residues; sequence PTHRRTHSRK. Residues 435 to 452 are compositionally biased toward low complexity; sequence NAPKPAKASGSSSRGSNK.

The protein belongs to the wetA family.

In terms of biological role, brlA, abaA and wetA are pivotal regulators of conidiophore development and conidium maturation. They act individually and together to regulate their own expression and that of numerous other sporulation-specific genes. The chain is Developmental regulatory protein wetA from Penicillium camembertii.